Here is a 207-residue protein sequence, read N- to C-terminus: Small ribosomal subunit protein uS2 (207 aa).

This sequence belongs to the universal ribosomal protein uS2 family.

The protein is Small ribosomal subunit protein uS2 of Pyrobaculum islandicum (strain DSM 4184 / JCM 9189 / GEO3).